The following is an 85-amino-acid chain: U4-theraphotoxin-Hhn1i (85 aa).

Residues 1 to 22 (MKVTLIAILTCAAVLVLHTTAA) form the signal peptide. Residues 23–48 (EELEAESQLMEVGMPDTELAAVDEER) constitute a propeptide that is removed on maturation. 3 cysteine pairs are disulfide-bonded: Cys-52–Cys-66, Cys-56–Cys-77, and Cys-71–Cys-82.

This sequence belongs to the neurotoxin 12 (Hwtx-2) family. 02 (Hwtx-2) subfamily. In terms of tissue distribution, expressed by the venom gland.

The protein resides in the secreted. In terms of biological role, postsynaptic neurotoxin. In Cyriopagopus hainanus (Chinese bird spider), this protein is U4-theraphotoxin-Hhn1i.